The primary structure comprises 184 residues: Probable chorismate pyruvate-lyase 1 (184 aa).

Substrate-binding residues include arginine 70, leucine 108, and glutamate 166.

It belongs to the UbiC family.

It is found in the cytoplasm. It carries out the reaction chorismate = 4-hydroxybenzoate + pyruvate. Its pathway is cofactor biosynthesis; ubiquinone biosynthesis. Its function is as follows. Removes the pyruvyl group from chorismate, with concomitant aromatization of the ring, to provide 4-hydroxybenzoate (4HB) for the ubiquinone pathway. The sequence is that of Probable chorismate pyruvate-lyase 1 from Burkholderia pseudomallei (strain 1710b).